Consider the following 199-residue polypeptide: dITP/XTP pyrophosphatase (199 aa).

Residue 8 to 13 (TRNKGK) participates in substrate binding. Mg(2+) contacts are provided by Glu-41 and Asp-70. Asp-70 acts as the Proton acceptor in catalysis. Substrate-binding positions include Ser-71, 153-156 (FGYD), Lys-176, and 181-182 (HR).

The protein belongs to the HAM1 NTPase family. In terms of assembly, homodimer. Mg(2+) is required as a cofactor.

It carries out the reaction XTP + H2O = XMP + diphosphate + H(+). The enzyme catalyses dITP + H2O = dIMP + diphosphate + H(+). The catalysed reaction is ITP + H2O = IMP + diphosphate + H(+). In terms of biological role, pyrophosphatase that catalyzes the hydrolysis of nucleoside triphosphates to their monophosphate derivatives, with a high preference for the non-canonical purine nucleotides XTP (xanthosine triphosphate), dITP (deoxyinosine triphosphate) and ITP. Seems to function as a house-cleaning enzyme that removes non-canonical purine nucleotides from the nucleotide pool, thus preventing their incorporation into DNA/RNA and avoiding chromosomal lesions. This is dITP/XTP pyrophosphatase from Geobacter sulfurreducens (strain ATCC 51573 / DSM 12127 / PCA).